Reading from the N-terminus, the 210-residue chain is Keratin-associated protein 26-1 (210 aa).

Belongs to the PMG family. Interacts with hair keratins. As to expression, localized high up in the well differentiated portion of the hair follicle cuticle (about 10-15 cell layers above the apex of the dermal papilla).

In terms of biological role, in the hair cortex, hair keratin intermediate filaments are embedded in an interfilamentous matrix, consisting of hair keratin-associated proteins (KRTAP), which are essential for the formation of a rigid and resistant hair shaft through their extensive disulfide bond cross-linking with abundant cysteine residues of hair keratins. The matrix proteins include the high-sulfur and high-glycine-tyrosine keratins. This chain is Keratin-associated protein 26-1 (KRTAP26-1), found in Homo sapiens (Human).